A 257-amino-acid polypeptide reads, in one-letter code: tRNA pseudouridine synthase A (257 aa).

Catalysis depends on Asp-43, which acts as the Nucleophile. Tyr-94 is a binding site for substrate.

Belongs to the tRNA pseudouridine synthase TruA family.

It catalyses the reaction uridine(38/39/40) in tRNA = pseudouridine(38/39/40) in tRNA. Its function is as follows. Formation of pseudouridine at positions 38, 39 and 40 in the anticodon stem and loop of transfer RNAs. The protein is tRNA pseudouridine synthase A of Pyrobaculum arsenaticum (strain DSM 13514 / JCM 11321 / PZ6).